Consider the following 119-residue polypeptide: Protein TusC (119 aa).

The protein belongs to the DsrF/TusC family. In terms of assembly, heterohexamer, formed by a dimer of trimers. The hexameric TusBCD complex contains 2 copies each of TusB, TusC and TusD. The TusBCD complex interacts with TusE.

The protein localises to the cytoplasm. Functionally, part of a sulfur-relay system required for 2-thiolation of 5-methylaminomethyl-2-thiouridine (mnm(5)s(2)U) at tRNA wobble positions. The sequence is that of Protein TusC from Buchnera aphidicola subsp. Acyrthosiphon pisum (strain APS) (Acyrthosiphon pisum symbiotic bacterium).